A 110-amino-acid polypeptide reads, in one-letter code: Endoribonuclease SymE (110 aa).

Residues 29-74 (SRYPDYTRIPALTMKGQWLEAAGFATGTEVDVRVMNGCIVLTAQQP) enclose the SpoVT-AbrB domain.

It belongs to the SymE family.

It localises to the cytoplasm. Its function is as follows. Involved in the degradation and recycling of damaged RNA. It is itself a target for degradation by the ATP-dependent protease Lon. This Salmonella typhi protein is Endoribonuclease SymE.